Consider the following 290-residue polypeptide: tRNA pseudouridine synthase A (290 aa).

Asp56 acts as the Nucleophile in catalysis. Tyr109 is a substrate binding site.

Belongs to the tRNA pseudouridine synthase TruA family.

The catalysed reaction is uridine(38/39/40) in tRNA = pseudouridine(38/39/40) in tRNA. In terms of biological role, formation of pseudouridine at positions 38, 39 and 40 in the anticodon stem and loop of transfer RNAs. The protein is tRNA pseudouridine synthase A of Methanobrevibacter smithii (strain ATCC 35061 / DSM 861 / OCM 144 / PS).